A 429-amino-acid polypeptide reads, in one-letter code: Enolase (429 aa).

Gln163 is a binding site for (2R)-2-phosphoglycerate. Glu205 (proton donor) is an active-site residue. Mg(2+)-binding residues include Asp242, Glu286, and Asp313. (2R)-2-phosphoglycerate contacts are provided by Lys338, Arg367, Ser368, and Lys389. Catalysis depends on Lys338, which acts as the Proton acceptor.

Belongs to the enolase family. Mg(2+) serves as cofactor.

It localises to the cytoplasm. The protein localises to the secreted. The protein resides in the cell surface. It catalyses the reaction (2R)-2-phosphoglycerate = phosphoenolpyruvate + H2O. It functions in the pathway carbohydrate degradation; glycolysis; pyruvate from D-glyceraldehyde 3-phosphate: step 4/5. Its function is as follows. Catalyzes the reversible conversion of 2-phosphoglycerate (2-PG) into phosphoenolpyruvate (PEP). It is essential for the degradation of carbohydrates via glycolysis. This Geotalea uraniireducens (strain Rf4) (Geobacter uraniireducens) protein is Enolase.